Consider the following 260-residue polypeptide: Thiazole synthase (260 aa).

Lys100 serves as the catalytic Schiff-base intermediate with DXP. Residues Gly162, 188–189 (AG), and 210–211 (NT) each bind 1-deoxy-D-xylulose 5-phosphate.

The protein belongs to the ThiG family. As to quaternary structure, homotetramer. Forms heterodimers with either ThiH or ThiS.

The protein resides in the cytoplasm. It carries out the reaction [ThiS sulfur-carrier protein]-C-terminal-Gly-aminoethanethioate + 2-iminoacetate + 1-deoxy-D-xylulose 5-phosphate = [ThiS sulfur-carrier protein]-C-terminal Gly-Gly + 2-[(2R,5Z)-2-carboxy-4-methylthiazol-5(2H)-ylidene]ethyl phosphate + 2 H2O + H(+). Its pathway is cofactor biosynthesis; thiamine diphosphate biosynthesis. Its function is as follows. Catalyzes the rearrangement of 1-deoxy-D-xylulose 5-phosphate (DXP) to produce the thiazole phosphate moiety of thiamine. Sulfur is provided by the thiocarboxylate moiety of the carrier protein ThiS. In vitro, sulfur can be provided by H(2)S. This is Thiazole synthase from Wolinella succinogenes (strain ATCC 29543 / DSM 1740 / CCUG 13145 / JCM 31913 / LMG 7466 / NCTC 11488 / FDC 602W) (Vibrio succinogenes).